Here is a 64-residue protein sequence, read N- to C-terminus: Putative antitoxin MJ0975 (64 aa).

The protein belongs to the UPF0165 family.

Possibly the antitoxin component of a type II toxin-antitoxin (TA) system. Its cognate toxin is VapC2 (Potential). This Methanocaldococcus jannaschii (strain ATCC 43067 / DSM 2661 / JAL-1 / JCM 10045 / NBRC 100440) (Methanococcus jannaschii) protein is Putative antitoxin MJ0975 (vapB2).